We begin with the raw amino-acid sequence, 305 residues long: Aurasperone B biosynthesis cluster protein A (305 aa).

Positions 1 to 26 (MSIFFSIRFWPAAISAAILWLPQVLG) are cleaved as a signal peptide. N-linked (GlcNAc...) asparagine glycosylation is found at asparagine 29, asparagine 34, asparagine 64, asparagine 83, asparagine 132, asparagine 183, asparagine 218, and asparagine 288.

The protein belongs to the bfoA family.

Part of the gene cluster that mediates the biosynthesis of aurasperone B, a dimeric gamma-naphthopyrone. The first step in the biosynthesis of aurasperone B is the production of gamma-naphthopyrone precursor YWA1 by the non-reducing polyketide synthase albA, via condensation of one acetyl-CoA starter unit with 6 malonyl-CoA units. YWA1 is then methylated by aunE at position C-6 to yield foncesin which is further methylated at position C-8 by aunD to produce fonsecin B. A key enzyme in the biosynthetic pathway is the cytochrome P450 monooxygenase aunB which catalyzes the oxidative dimerization of fonsecin B to aurasperone B. AunB also catalyzes the oxidative dimerization of rubrofusarin B into aurasperone A. This chain is Aurasperone B biosynthesis cluster protein A, found in Aspergillus niger (strain ATCC 1015 / CBS 113.46 / FGSC A1144 / LSHB Ac4 / NCTC 3858a / NRRL 328 / USDA 3528.7).